We begin with the raw amino-acid sequence, 184 residues long: Large ribosomal subunit protein uL5 (184 aa).

It belongs to the universal ribosomal protein uL5 family. As to quaternary structure, part of the 50S ribosomal subunit; part of the 5S rRNA/L5/L18/L25 subcomplex. Contacts the 5S rRNA and the P site tRNA. Forms a bridge to the 30S subunit in the 70S ribosome.

This is one of the proteins that bind and probably mediate the attachment of the 5S RNA into the large ribosomal subunit, where it forms part of the central protuberance. In the 70S ribosome it contacts protein S13 of the 30S subunit (bridge B1b), connecting the 2 subunits; this bridge is implicated in subunit movement. Contacts the P site tRNA; the 5S rRNA and some of its associated proteins might help stabilize positioning of ribosome-bound tRNAs. This Corynebacterium kroppenstedtii (strain DSM 44385 / JCM 11950 / CIP 105744 / CCUG 35717) protein is Large ribosomal subunit protein uL5.